Reading from the N-terminus, the 593-residue chain is UvrABC system protein C (593 aa).

Residues 17-94 enclose the GIY-YIG domain; the sequence is MEPGCYLMKD…IKQYQPRYNI (78 aa). The 36-residue stretch at 199–234 folds into the UVR domain; that stretch reads KTILKSLEERMLTASESLDFERAKEYRDLIQHIQNL.

It belongs to the UvrC family. In terms of assembly, interacts with UvrB in an incision complex.

The protein resides in the cytoplasm. Its function is as follows. The UvrABC repair system catalyzes the recognition and processing of DNA lesions. UvrC both incises the 5' and 3' sides of the lesion. The N-terminal half is responsible for the 3' incision and the C-terminal half is responsible for the 5' incision. The sequence is that of UvrABC system protein C from Staphylococcus aureus (strain MRSA252).